Consider the following 340-residue polypeptide: Phosphoribosylformylglycinamidine cyclo-ligase (340 aa).

It belongs to the AIR synthase family.

It is found in the cytoplasm. It catalyses the reaction 2-formamido-N(1)-(5-O-phospho-beta-D-ribosyl)acetamidine + ATP = 5-amino-1-(5-phospho-beta-D-ribosyl)imidazole + ADP + phosphate + H(+). It functions in the pathway purine metabolism; IMP biosynthesis via de novo pathway; 5-amino-1-(5-phospho-D-ribosyl)imidazole from N(2)-formyl-N(1)-(5-phospho-D-ribosyl)glycinamide: step 2/2. This is Phosphoribosylformylglycinamidine cyclo-ligase from Streptococcus pneumoniae (strain Taiwan19F-14).